A 205-amino-acid chain; its full sequence is Thymidylate kinase (205 aa).

10–17 (GIDGAGKT) provides a ligand contact to ATP.

The protein belongs to the thymidylate kinase family.

It carries out the reaction dTMP + ATP = dTDP + ADP. Phosphorylation of dTMP to form dTDP in both de novo and salvage pathways of dTTP synthesis. The sequence is that of Thymidylate kinase from Nitrosospira multiformis (strain ATCC 25196 / NCIMB 11849 / C 71).